Here is a 73-residue protein sequence, read N- to C-terminus: MKANIHPDYHTIKVVMTDGTEYMTRSTWGKEGDTMNLDIDPTTHPAWTGGSQTLLDRGGRVTKFKNRFGNLGI.

The protein belongs to the bacterial ribosomal protein bL31 family. Type A subfamily. In terms of assembly, part of the 50S ribosomal subunit.

Its function is as follows. Binds the 23S rRNA. In Brucella abortus (strain 2308), this protein is Large ribosomal subunit protein bL31.